The following is a 442-amino-acid chain: Prenyltransferase nscD (442 aa).

It belongs to the tryptophan dimethylallyltransferase family.

It functions in the pathway secondary metabolite biosynthesis. Its function is as follows. Prenyltransferase; part of the gene cluster that mediates the biosynthesis of neosartoricin B, a prenylated anthracenone that probably exhibits T-cell antiproliferative activity, suggestive of a physiological role as an immunosuppressive agent. The non-reducing polyketide synthase nscA probably synthesizes and cyclizes the decaketide backbone. The hydrolase nscB then mediates the product release through hydrolysis followed by spontaneous decarboxylation. The prenyltransferase nscD catalyzes the addition of the dimethylallyl group to the aromatic C5. The FAD-dependent monooxygenase nscC is then responsible for the stereospecific hydroxylation at C2. Neosartoricin B can be converted into two additional compounds neosartoricins C and D. Neosartoricin C is a spirocyclic compound that is cyclized through the attack of C3 hydroxyl on C14, followed by dehydration. On the other hand, neosartoricin D is a further cyclized compound in which attack of C2 on C14 in neosartoricin C results in the formation of the acetal-containing dioxabicyclo-octanone ring. Both of these compounds are novel and possibly represent related metabolites of the gene cluster. The polypeptide is Prenyltransferase nscD (Trichophyton verrucosum (strain HKI 0517)).